An 894-amino-acid polypeptide reads, in one-letter code: Mitogen-activated protein kinase kinase kinase kinase 3 (894 aa).

Methionine 1 is modified (N-acetylmethionine). The Protein kinase domain maps to phenylalanine 16 to valine 273. Residues isoleucine 22–valine 30, lysine 45, and lysine 48 contribute to the ATP site. Residue aspartate 136 is the Proton acceptor of the active site. Phosphoserine occurs at positions 329 and 398. The disordered stretch occupies residues alanine 410–leucine 536. The span at glutamine 473–lysine 487 shows a compositional bias: pro residues. A compositionally biased stretch (basic and acidic residues) spans asparagine 513–proline 529. Positions proline 556–valine 867 constitute a CNH domain.

It belongs to the protein kinase superfamily. STE Ser/Thr protein kinase family. STE20 subfamily. In terms of assembly, interacts with SH3GL2. Interaction appears to regulate MAP4K3-mediated JNK activation. Mg(2+) serves as cofactor. Ubiquitously expressed in all tissues examined, with high levels in heart, brain, placenta, skeletal muscle, kidney and pancreas and lower levels in lung and liver.

It carries out the reaction L-seryl-[protein] + ATP = O-phospho-L-seryl-[protein] + ADP + H(+). The catalysed reaction is L-threonyl-[protein] + ATP = O-phospho-L-threonyl-[protein] + ADP + H(+). In terms of biological role, serine/threonine kinase that plays a role in the response to environmental stress. Appears to act upstream of the JUN N-terminal pathway. Activator of the Hippo signaling pathway which plays a pivotal role in organ size control and tumor suppression by restricting proliferation and promoting apoptosis. MAP4Ks act in parallel to and are partially redundant with STK3/MST2 and STK4/MST2 in the phosphorylation and activation of LATS1/2, and establish MAP4Ks as components of the expanded Hippo pathway. This Homo sapiens (Human) protein is Mitogen-activated protein kinase kinase kinase kinase 3.